A 477-amino-acid polypeptide reads, in one-letter code: Stromelysin-3 (477 aa).

The first 17 residues, Met-1–Ser-17, serve as a signal peptide directing secretion. Residues Ala-18–Arg-85 constitute a propeptide, activation peptide. Residues Arg-64–Gln-83 form a disordered region. Cys-65, His-152, and Asp-154 together coordinate Zn(2+). Asp-159, Gly-160, Gly-162, and Ile-164 together coordinate Ca(2+). Zn(2+) is bound by residues His-167, His-180, and His-203. Glu-204 is a catalytic residue. Residues His-207 and His-213 each contribute to the Zn(2+) site. Residues Cys-279 and Cys-466 are joined by a disulfide bond. Hemopexin repeat units follow at residues Lys-280 to Ile-324, Pro-325 to Val-369, Thr-370 to Val-418, and Pro-419 to Cys-466.

Belongs to the peptidase M10A family. It depends on Ca(2+) as a cofactor. The cofactor is Zn(2+). Expressed in fibroblast cells that are activated by thyroid hormone. High levels in resorbing tail.

The protein localises to the secreted. Its subcellular location is the extracellular space. It is found in the extracellular matrix. Its function is as follows. May be involved in the modification of the extracellular matrix during metamorphic apoptosis. The chain is Stromelysin-3 (mmp11) from Xenopus laevis (African clawed frog).